The following is a 582-amino-acid chain: MLNERQLKIVDLLEQQPRTPGELAQQTGVSGRTILRDIDYLNFTLNGKARIFASGSAGYQLEIFERRSFFQLLQKHDNDDRLLALLLLNTFTPRAQLASALNLPETWVAERLPRLKQRYERTCCLASRPGLGHFIDETEEKRVILLANLLRKDPFLIPLAGITRDNLQHLSTACDNQHRWPLMQGDYLSSLILAIYALRNQLTDEWPQYPGDEIKQIVEHSGLFLGDNAVRTLTGLIEKQHQQAQVISADNVQGLLQRVPGIASLNIIDAQLVENITGHLLRCLAAPVWIAEHRQSSMNNLKAAWPAAFDMSLHFITLLREQLDIPLFDSDLIGLYFACALERHQNERQPIILLSDQNAIATINQLAIERDVLNCRVIIARSLSELVAIREEIEPLLIINNSHYLLDDAVNNYITVKNIITAAGIEQIKHFLATAFIRQQPERFFSAPGSFHYSNVRGESWQHITRQICAQLVAQHHITADEAQRIIAREGEGENLIVNRLAIPHCWSEQERRFRGFFITLAQPVEVNNEVINHVLIACAAADARHELKIFSYLASILCQHPAEIIAGLTGYEAFMELLHKG.

The H-T-H motif DNA-binding region spans 20–39 (PGELAQQTGVSGRTILRDID). The PTS EIIA type-2 domain maps to 443–582 (RFFSAPGSFH…EAFMELLHKG (140 aa)). Phosphohistidine; by HPr is present on H505.

Could be involved in the regulation of the transcription of the FRV operon. The sequence is that of Putative frv operon regulatory protein (frvR) from Escherichia coli (strain K12).